A 249-amino-acid polypeptide reads, in one-letter code: tRNA pseudouridine synthase A (249 aa).

Catalysis depends on D52, which acts as the Nucleophile. Y111 contacts substrate.

This sequence belongs to the tRNA pseudouridine synthase TruA family. In terms of assembly, homodimer.

It carries out the reaction uridine(38/39/40) in tRNA = pseudouridine(38/39/40) in tRNA. In terms of biological role, formation of pseudouridine at positions 38, 39 and 40 in the anticodon stem and loop of transfer RNAs. The sequence is that of tRNA pseudouridine synthase A from Brachyspira hyodysenteriae (strain ATCC 49526 / WA1).